A 353-amino-acid chain; its full sequence is Putative transport protein aq_740 (353 aa).

The next 8 helical transmembrane spans lie at 4–24, 28–48, 60–80, 156–176, 209–229, 240–260, 268–288, and 309–329; these read LSLF…LYLL, FNPI…YGFI, FLVI…FAVI, VYTA…LFFI, VLAV…MGFI, LIWA…AAFV, LFTT…TFLI, and VALF…GVFL.

The protein belongs to the autoinducer-2 exporter (AI-2E) (TC 2.A.86) family.

It localises to the cell membrane. This chain is Putative transport protein aq_740, found in Aquifex aeolicus (strain VF5).